A 602-amino-acid chain; its full sequence is Elongation factor 4 (602 aa).

A tr-type G domain is found at 2–184 (NHIRNFSIIA…LIVAKVPAPR (183 aa)). GTP contacts are provided by residues 14–19 (DHGKST) and 131–134 (NKMD).

It belongs to the TRAFAC class translation factor GTPase superfamily. Classic translation factor GTPase family. LepA subfamily.

It is found in the cell inner membrane. It catalyses the reaction GTP + H2O = GDP + phosphate + H(+). Its function is as follows. Required for accurate and efficient protein synthesis under certain stress conditions. May act as a fidelity factor of the translation reaction, by catalyzing a one-codon backward translocation of tRNAs on improperly translocated ribosomes. Back-translocation proceeds from a post-translocation (POST) complex to a pre-translocation (PRE) complex, thus giving elongation factor G a second chance to translocate the tRNAs correctly. Binds to ribosomes in a GTP-dependent manner. In Paracidovorax citrulli (strain AAC00-1) (Acidovorax citrulli), this protein is Elongation factor 4.